The following is a 459-amino-acid chain: Antizyme inhibitor 2 (459 aa).

The tract at residues 117 to 140 (QVAQIKYAAKHGVRLLSFDNEVEL) is necessary for polyamine uptake stimulation.

The protein belongs to the Orn/Lys/Arg decarboxylase class-II family. ODC antizyme inhibitor subfamily. As to quaternary structure, monomer. Interacts with OAZ1, OAZ2 and OAZ3; this interaction disrupts the interaction between the antizyme and ODC1. Does not form a heterodimer with ODC1. Ubiquitinated, leading to its proteasomal degradation; a process that is reduced in presence of antizymes. May also be degraded through the lysosomal degradative pathway in a proteasomal-independent manner. As to expression, expressed in the medulla and chromaffin cells of the adrenal gland. Expressed in the Langerhans islets of the pancreas. Expressed in the inner part of the seminiferous tubules and in spermatozoa located in the lumen of the epididymis of the testis. Expressed in the cortex, hippocampus and cerebellum of the brain. Expressed in normal and neoplastic mast cells (MC) (at protein level). Expressed in testis, pancreas and brain. Expressed throughout the differentiation process from spermatids to spermatozoa in the inner part of the seminiferous tubules. Expressed in the kidney: expressed in the superficial (Cs) and the deep layer (Cd) of the cortex region and in the outer stripe (OS), inner stripe (IS) and the inner medulla papilla (IM) of the medulla region.

The protein resides in the nucleus. It localises to the cytoplasm. It is found in the perinuclear region. The protein localises to the membrane. Its subcellular location is the cytoplasmic vesicle. The protein resides in the endoplasmic reticulum-Golgi intermediate compartment. It localises to the golgi apparatus. It is found in the cis-Golgi network. The protein localises to the trans-Golgi network. Its subcellular location is the cytoplasmic granule. The protein resides in the cell projection. It localises to the axon. It is found in the dendrite. The protein localises to the perikaryon. Its function is as follows. Antizyme inhibitor (AZI) protein that positively regulates ornithine decarboxylase (ODC) activity and polyamine uptake. AZI is an enzymatically inactive ODC homolog that counteracts the negative effect of ODC antizymes (AZs) OAZ1, OAZ2 and OAZ3 on ODC activity by competing with ODC for antizyme-binding. Inhibits antizyme-dependent ODC degradation and releases ODC monomers from their inactive complex with antizymes, leading to formation of the catalytically active ODC homodimer and restoring polyamine production. Participates in the morphological integrity of the trans-Golgi network (TGN) and functions as a regulator of intracellular secretory vesicle trafficking. This chain is Antizyme inhibitor 2 (Azin2), found in Mus musculus (Mouse).